A 1415-amino-acid chain; its full sequence is MKNYKYQNTLIGKKQLRQLLAWSFTNYDSMQACALADELKYLGFKYASQAGISISIEDLKIPFVKNLMLEKANQEIINAEKIYLKGKITDVERFQKIIDTWSLTSESLKEQVIYYFKNYDPLNSVYIMAFSGARGNLSQVRQLVGMRGLMSDPSGEIMNLPIKKNFREGLTITDYLMSGYGARKGIVDTALKTANSGYLTRRLIDVGQDVLIREKDCLTNHSFLFSVSNEELKSLNLIYQKILGRVLSKPIHDPKTNRILVPAGTQITPKLIEKFKEYNVKKFYIRSPLTCNLYRAICQNCYGWDLANENLVDIGEAIGILAGQSIGEPGTQLTMRTFHTGGIFTSEARQQITTPINGVIRFYKTLKTVLLRTNRGEDVLITKNSGSVILIPDDEDQDLVQIEILRNTILFPKNNQYIVKDTVIGELLNTNRQIKTEVKPILSDTCGEIFMPVLKKKINLLNNNKLLWILSGQLYNGPINSFVNFYSDYKLNCRSYIFRTKIINHYSGSVEFINTKSNLYQRLIRIKNNKYAFFNSKLEKLRYSIQHKNYLLNLQGDKYLVKIQKKDLRLYLQATRNYQVATLITNRFKTLVGGTVYYDHQNVYKNYKPNSTINYLSRVNFLNNYKPVVSHKTIIWLGEEVYKVNCELNILLAEHGDFISEGFELIPGLFSKTSGVVVIKQKNNLIHTISIKSGLVYEGKKFKMTSKKVYYPGEIIFSHIPITKISFCEHITGKNIEQLLVRPIEIYEFPYLNNISAKIQNTHNKDSNIRLSSKIIYSYKPNQLIKGTRNLNLISTILTLKSKETVTKNLNLELSHNQKTKLIDLKISEKFNLNHYISPNLRYKNLQSCLLIQPNQFIDRYTNLGYLESKTSNSLEIVKIKLKIKDSKQILLISNQDCLTVKKEKFIGKKLNDFIINSSNVNETGKIIIENENNLTLQKGKPYFFPNCKDDNVINKTNLQYKTISPTRVSPRLEKNINYKISLNYYDMMKLSVNKDCTLSEKNEDPIKIKSEFSKLFLKKNGKLYSSLIPQFFKKFSLHTSEFSPKYKQIIQPNGLAKRTIGKMDRTLLMQSSEITKNDYKNLKNSNYQLALLKFVEYPFTKSTKSIGLYSITEDYFEQDVNSVFCKNSEFIEEGETLGLLNLEKEITGDIVQGLPRIEEILEARKKNSNIKRIPTSQKKGLLVQKSSLDTNFEFRKLGTNIKENEKVNPHKLLKVYFNYYGWIKPFICDQKEEIKYARLIKNYEGSYKSFKKVQSFILDSVQAVYQSQGVIINDKHLEVIIKQMTTKVLITYEGNTPLLRREVIDLYHIQYINQIIQSQGKQSACYVPLLLGITKAALNNPSFISAASFQETTRVLTKAAIEGRIDWLRGLKENIIIGHLIPAGTGSQNYRNCFKKESLVRSKLPKSFDTILTR.

Residues Cys-217, Cys-291, Cys-298, and Cys-301 each contribute to the Zn(2+) site.

This sequence belongs to the RNA polymerase beta' chain family. RpoC2 subfamily. As to quaternary structure, in plastids the minimal PEP RNA polymerase catalytic core is composed of four subunits: alpha, beta, beta', and beta''. When a (nuclear-encoded) sigma factor is associated with the core the holoenzyme is formed, which can initiate transcription. The cofactor is Zn(2+).

Its subcellular location is the plastid. It localises to the chloroplast. The catalysed reaction is RNA(n) + a ribonucleoside 5'-triphosphate = RNA(n+1) + diphosphate. DNA-dependent RNA polymerase catalyzes the transcription of DNA into RNA using the four ribonucleoside triphosphates as substrates. The polypeptide is DNA-directed RNA polymerase subunit beta'' (Phaeodactylum tricornutum (strain CCAP 1055/1)).